The following is a 1040-amino-acid chain: Multidrug resistance protein MdtB (1040 aa).

12 helical membrane-spanning segments follow: residues 16–36 (FIMR…AGII), 347–367 (LMMA…NIPA), 369–389 (IIPG…MVFL), 396–416 (LTLM…IVVI), 440–460 (IGFT…PLLF), 472–492 (FAIT…TLTP), 537–557 (WLTL…WVFI), 863–883 (LGST…VLGI), 888–908 (FIHP…ALLA), 911–931 (IAGS…IGIV), 968–988 (ILMT…STGV), and 998–1018 (IGMV…TPVI).

Belongs to the resistance-nodulation-cell division (RND) (TC 2.A.6) family. MdtB subfamily. As to quaternary structure, part of a tripartite efflux system composed of MdtA, MdtB and MdtC. MdtB forms a heteromultimer with MdtC.

The protein localises to the cell inner membrane. In terms of biological role, the MdtABC tripartite complex confers resistance against novobiocin and deoxycholate. The protein is Multidrug resistance protein MdtB of Escherichia coli O17:K52:H18 (strain UMN026 / ExPEC).